A 164-amino-acid chain; its full sequence is General odorant-binding protein 1 (164 aa).

Residues 1–18 form the signal peptide; sequence MWKLVVVLTVNLLQGALT. 3 cysteine pairs are disulfide-bonded: Cys-37-Cys-72, Cys-68-Cys-126, and Cys-115-Cys-135.

This sequence belongs to the PBP/GOBP family. In terms of assembly, homodimer. In terms of tissue distribution, antenna.

Its function is as follows. Present in the aqueous fluid surrounding olfactory sensory dendrites and are thought to aid in the capture and transport of hydrophobic odorants into and through this fluid. This is General odorant-binding protein 1 from Bombyx mori (Silk moth).